The following is a 578-amino-acid chain: Glutamate--tRNA ligase (578 aa).

The 'HIGH' region signature appears at Pro97–Asn107.

Belongs to the class-I aminoacyl-tRNA synthetase family. Glutamate--tRNA ligase type 2 subfamily.

The protein localises to the cytoplasm. It catalyses the reaction tRNA(Glu) + L-glutamate + ATP = L-glutamyl-tRNA(Glu) + AMP + diphosphate. In terms of biological role, catalyzes the attachment of glutamate to tRNA(Glu) in a two-step reaction: glutamate is first activated by ATP to form Glu-AMP and then transferred to the acceptor end of tRNA(Glu). The polypeptide is Glutamate--tRNA ligase (Hyperthermus butylicus (strain DSM 5456 / JCM 9403 / PLM1-5)).